Reading from the N-terminus, the 107-residue chain is UPF0145 protein BH1111 (107 aa).

Belongs to the UPF0145 family.

In Halalkalibacterium halodurans (strain ATCC BAA-125 / DSM 18197 / FERM 7344 / JCM 9153 / C-125) (Bacillus halodurans), this protein is UPF0145 protein BH1111.